The chain runs to 145 residues: D-aminoacyl-tRNA deacylase (145 aa).

The Gly-cisPro motif, important for rejection of L-amino acids signature appears at 137-138; it reads GP.

It belongs to the DTD family. Homodimer.

It is found in the cytoplasm. The enzyme catalyses glycyl-tRNA(Ala) + H2O = tRNA(Ala) + glycine + H(+). The catalysed reaction is a D-aminoacyl-tRNA + H2O = a tRNA + a D-alpha-amino acid + H(+). Its function is as follows. An aminoacyl-tRNA editing enzyme that deacylates mischarged D-aminoacyl-tRNAs. Also deacylates mischarged glycyl-tRNA(Ala), protecting cells against glycine mischarging by AlaRS. Acts via tRNA-based rather than protein-based catalysis; rejects L-amino acids rather than detecting D-amino acids in the active site. By recycling D-aminoacyl-tRNA to D-amino acids and free tRNA molecules, this enzyme counteracts the toxicity associated with the formation of D-aminoacyl-tRNA entities in vivo and helps enforce protein L-homochirality. This Salmonella agona (strain SL483) protein is D-aminoacyl-tRNA deacylase.